The primary structure comprises 77 residues: MPSIKIRENEPFEIAIRRFKRACEKAGVLSEVRRREYYEKPTEERKRKAAAAIKRHLKKLSRERFALQNLRKGRPQQ.

Belongs to the bacterial ribosomal protein bS21 family.

This is Small ribosomal subunit protein bS21 from Methylococcus capsulatus (strain ATCC 33009 / NCIMB 11132 / Bath).